Reading from the N-terminus, the 127-residue chain is Glycine cleavage system H protein (127 aa).

One can recognise a Lipoyl-binding domain in the interval K22 to E104. The residue at position 63 (K63) is an N6-lipoyllysine.

It belongs to the GcvH family. In terms of assembly, the glycine cleavage system is composed of four proteins: P, T, L and H. (R)-lipoate is required as a cofactor.

In terms of biological role, the glycine cleavage system catalyzes the degradation of glycine. The H protein shuttles the methylamine group of glycine from the P protein to the T protein. Functionally, is also involved in protein lipoylation via its role as an octanoyl/lipoyl carrier protein intermediate. The sequence is that of Glycine cleavage system H protein from Bacillus pumilus (strain SAFR-032).